Here is a 441-residue protein sequence, read N- to C-terminus: Mitochondrial distribution and morphology protein 12 (441 aa).

Positions 1–441 constitute an SMP-LTD domain; sequence MSIDIDWERA…VYPSFWTFLV (441 aa). 2 disordered regions span residues 68–89 and 183–289; these read DFYE…PMRE and RAVT…RMRE. Composition is skewed to polar residues over residues 226 to 245 and 253 to 263; these read SRPS…SVST and PSQTLLANNPG.

It belongs to the MDM12 family. As to quaternary structure, component of the ER-mitochondria encounter structure (ERMES) or MDM complex, composed of MMM1, MDM10, MDM12 and MDM34. An MMM1 homodimer associates with one molecule of MDM12 on each side in a pairwise head-to-tail manner, and the SMP-LTD domains of MMM1 and MDM12 generate a continuous hydrophobic tunnel for phospholipid trafficking.

It is found in the mitochondrion outer membrane. It localises to the endoplasmic reticulum membrane. Functionally, component of the ERMES/MDM complex, which serves as a molecular tether to connect the endoplasmic reticulum (ER) and mitochondria. Components of this complex are involved in the control of mitochondrial shape and protein biogenesis, and function in nonvesicular lipid trafficking between the ER and mitochondria. MDM12 is required for the interaction of the ER-resident membrane protein MMM1 and the outer mitochondrial membrane-resident beta-barrel protein MDM10. The MDM12-MMM1 subcomplex functions in the major beta-barrel assembly pathway that is responsible for biogenesis of all mitochondrial outer membrane beta-barrel proteins, and acts in a late step after the SAM complex. The MDM10-MDM12-MMM1 subcomplex further acts in the TOM40-specific pathway after the action of the MDM12-MMM1 complex. Essential for establishing and maintaining the structure of mitochondria and maintenance of mtDNA nucleoids. The sequence is that of Mitochondrial distribution and morphology protein 12 from Paracoccidioides lutzii (strain ATCC MYA-826 / Pb01) (Paracoccidioides brasiliensis).